Consider the following 705-residue polypeptide: MLTPIIRKFQYGQHTVTIETGMMARQATAAVMVSMDDTAVFVTVVGQKKAKPGQSFFPLTVNYQERTYAAGRIPGSFFRREGRPSEGETLTSRLIDRPIRPLFPDSFLNEVQVIATVVSVNPQINPDIVALIGASAALSLSGIPFNGPIGAARVGFINDQYVLNPTTDELKESRLDLVVAGTAGAVLMVESEADILSEEQMLGAVVFGHEQQQVVIENINALVAEAGKPKWDWQAEPVNEALHARVAELAEARLGDAYRITEKQERYTQVDAIKADVTEALLAQDDTLDAAEIQDILASVEKNVVRSRVLRGEPRIDGREKDMIRGLDVRTGILPRTHGSALFTRGETQALVTATLGTARDAQNIDELMGERTDSFLLHYNFPPYCVGETGMVGSPKRREIGHGRLAKRGVLAVMPSASEFPYTIRVVSEITESNGSSSMASVCGASLALMDAGVPIKAAVAGIAMGLVKEGDNFVVLSDILGDEDHLGDMDFKVAGSRDGVTALQMDIKIEGITREIMQVALNQAKGARLHILGVMEQAISTPRGDISEFAPRIYTMKINPEKIKDVIGKGGSVIRALTDETGTTIEIEDDGTIKIAATDGDKAKHAIRRIEEITAEIEVGRIYAGKVTRIVDFGAFVAIGGGKEGLVHISQIADKRVEKVTDYLQMGQDVPVKVMEVDRQGRIRLSIKEATTPDAEAPEAAAE.

Residues Asp-486 and Asp-492 each contribute to the Mg(2+) site. Residues 553–612 (PRIYTMKINPEKIKDVIGKGGSVIRALTDETGTTIEIEDDGTIKIAATDGDKAKHAIRRI) enclose the KH domain. The S1 motif domain occupies 622–690 (GRIYAGKVTR…RQGRIRLSIK (69 aa)).

It belongs to the polyribonucleotide nucleotidyltransferase family. In terms of assembly, component of the RNA degradosome, which is a multiprotein complex involved in RNA processing and mRNA degradation. Mg(2+) serves as cofactor.

The protein localises to the cytoplasm. The catalysed reaction is RNA(n+1) + phosphate = RNA(n) + a ribonucleoside 5'-diphosphate. Functionally, involved in mRNA degradation. Catalyzes the phosphorolysis of single-stranded polyribonucleotides processively in the 3'- to 5'-direction. This is Polyribonucleotide nucleotidyltransferase from Yersinia pseudotuberculosis serotype O:3 (strain YPIII).